Reading from the N-terminus, the 81-residue chain is Photosystem I iron-sulfur center (81 aa).

2 consecutive 4Fe-4S ferredoxin-type domains span residues 2 to 31 and 39 to 68; these read SHSV…MIPW and IASA…VRVS. Residues Cys11, Cys14, Cys17, Cys21, Cys48, Cys51, Cys54, and Cys58 each contribute to the [4Fe-4S] cluster site.

The eukaryotic PSI reaction center is composed of at least 11 subunits. [4Fe-4S] cluster serves as cofactor.

The protein localises to the plastid. It localises to the chloroplast thylakoid membrane. It catalyses the reaction reduced [plastocyanin] + hnu + oxidized [2Fe-2S]-[ferredoxin] = oxidized [plastocyanin] + reduced [2Fe-2S]-[ferredoxin]. In terms of biological role, apoprotein for the two 4Fe-4S centers FA and FB of photosystem I (PSI); essential for photochemical activity. FB is the terminal electron acceptor of PSI, donating electrons to ferredoxin. The C-terminus interacts with PsaA/B/D and helps assemble the protein into the PSI complex. Required for binding of PsaD and PsaE to PSI. PSI is a plastocyanin-ferredoxin oxidoreductase, converting photonic excitation into a charge separation, which transfers an electron from the donor P700 chlorophyll pair to the spectroscopically characterized acceptors A0, A1, FX, FA and FB in turn. The chain is Photosystem I iron-sulfur center from Daucus carota (Wild carrot).